The following is a 49-amino-acid chain: Large ribosomal subunit protein eL40 (49 aa).

It belongs to the eukaryotic ribosomal protein eL40 family.

This is Large ribosomal subunit protein eL40 from Methanopyrus kandleri (strain AV19 / DSM 6324 / JCM 9639 / NBRC 100938).